We begin with the raw amino-acid sequence, 483 residues long: Glutamate--tRNA ligase (483 aa).

Residues 9–19 carry the 'HIGH' region motif; the sequence is PSPTGFLHIGN. Positions 253–257 match the 'KMSKS' region motif; sequence KLSKR. Lys-256 provides a ligand contact to ATP.

Belongs to the class-I aminoacyl-tRNA synthetase family. Glutamate--tRNA ligase type 1 subfamily. In terms of assembly, monomer.

It localises to the cytoplasm. The enzyme catalyses tRNA(Glu) + L-glutamate + ATP = L-glutamyl-tRNA(Glu) + AMP + diphosphate. Catalyzes the attachment of glutamate to tRNA(Glu) in a two-step reaction: glutamate is first activated by ATP to form Glu-AMP and then transferred to the acceptor end of tRNA(Glu). This Mycoplasma mycoides subsp. mycoides SC (strain CCUG 32753 / NCTC 10114 / PG1) protein is Glutamate--tRNA ligase.